We begin with the raw amino-acid sequence, 593 residues long: MSAKERGDQNAVVDALRSIQPAVFIPASVVIVAMIVVSVVYSSVAENAFVRLNSAITGGVGWWYILVATGFVVFALYCGISRIGTIRLGRDDELPEFSFWAWLAMLFSAGMGIGLVFYGVAEPLSHYLRPPRSRGVPALTDAAANQAMALTVFHWGLHAWAIYVVVGLGMAYMTYRRGRPLSVRWLLEPVVGRGRVEGALGHAVDVIAIVGTLFGVATSLGFGITQIASGLEYLGWIRVDNWWMVGMIAAITATATASVVSGVSKGLKWLSNINMALAAALALFVLLLGPTLFLLQSWVQNLGGYVQSLPQFMLRTAPFSHDGWLGDWTIFYWGWWISWAPFVGMFIARISRGRTIREFIGAVLLVPTVIASLWFTIFGDSALLRQRNNGDMLVNGAVDTNTSLFRLLDGLPIGAITSVLAVLVIVFFFVTSSDSGSLVIDILSAGGELDPPKLTRVYWAVLEGVAAAVLLLIGGAGSLTALRTAAIATALPFSIVMVVACYAMTKAFHFDLAATPRLLHVTVPDVVAAGNRRRHDISATLSGLIAVRDVDSGTYIVHPDTGALTVTAPPDPLDDHVFESDRHVTRRNTTSSR.

Helical transmembrane passes span 21–41, 60–80, 97–117, 148–168, 204–224, 243–263, 275–295, 328–348, 359–379, 410–430, 457–477, and 485–505; these read PAVFIPASVVIVAMIVVSVVY, VGWWYILVATGFVVFALYCGI, FSFWAWLAMLFSAGMGIGLVF, MALTVFHWGLHAWAIYVVVGL, VDVIAIVGTLFGVATSLGFGI, WMVGMIAAITATATASVVSGV, MALAAALALFVLLLGPTLFLL, WTIFYWGWWISWAPFVGMFIA, FIGAVLLVPTVIASLWFTIFG, GLPIGAITSVLAVLVIVFFFV, VYWAVLEGVAAAVLLLIGGAG, and AAIATALPFSIVMVVACYAMT.

It belongs to the BCCT transporter (TC 2.A.15) family.

The protein localises to the cell membrane. This is an uncharacterized protein from Mycobacterium tuberculosis (strain CDC 1551 / Oshkosh).